Reading from the N-terminus, the 850-residue chain is Trimethylamine-N-oxide reductase (850 aa).

The tat-type signal signal peptide spans 1–39; sequence MKNKDSLHVSRRRFLAQLGGLTVAGMLGPSLLTPRSARA. Position 191 (S191) interacts with Mo-bis(molybdopterin guanine dinucleotide).

Belongs to the prokaryotic molybdopterin-containing oxidoreductase family. Requires Mo-bis(molybdopterin guanine dinucleotide) as cofactor. In terms of processing, predicted to be exported by the Tat system. The position of the signal peptide cleavage has not been experimentally proven.

Its subcellular location is the periplasm. The enzyme catalyses trimethylamine + 2 Fe(III)-[cytochrome c] + H2O = trimethylamine N-oxide + 2 Fe(II)-[cytochrome c] + 3 H(+). Functionally, reduces trimethylamine-N-oxide (TMAO) into trimethylamine; an anaerobic reaction coupled to energy-yielding reactions. This is Trimethylamine-N-oxide reductase (torA) from Salmonella typhimurium (strain LT2 / SGSC1412 / ATCC 700720).